The sequence spans 430 residues: Lipoyl synthase, mitochondrial (430 aa).

The transit peptide at 1–37 (MATSAGKLRTLYSAHSSLSSLPPSARPTLQLATLRSY) directs the protein to the mitochondrion. Over residues 39 to 55 (TTTPHDSPIGNTSNTPP) the composition is skewed to polar residues. The segment at 39 to 58 (TTTPHDSPIGNTSNTPPTVK) is disordered. 7 residues coordinate [4Fe-4S] cluster: C141, C146, C152, C172, C176, C179, and S387. The Radical SAM core domain occupies 155–376 (GSSKSAATAT…KERALEMGFL (222 aa)).

Belongs to the radical SAM superfamily. Lipoyl synthase family. The cofactor is [4Fe-4S] cluster.

It is found in the mitochondrion. The catalysed reaction is [[Fe-S] cluster scaffold protein carrying a second [4Fe-4S](2+) cluster] + N(6)-octanoyl-L-lysyl-[protein] + 2 oxidized [2Fe-2S]-[ferredoxin] + 2 S-adenosyl-L-methionine + 4 H(+) = [[Fe-S] cluster scaffold protein] + N(6)-[(R)-dihydrolipoyl]-L-lysyl-[protein] + 4 Fe(3+) + 2 hydrogen sulfide + 2 5'-deoxyadenosine + 2 L-methionine + 2 reduced [2Fe-2S]-[ferredoxin]. The protein operates within protein modification; protein lipoylation via endogenous pathway; protein N(6)-(lipoyl)lysine from octanoyl-[acyl-carrier-protein]: step 2/2. In terms of biological role, catalyzes the radical-mediated insertion of two sulfur atoms into the C-6 and C-8 positions of the octanoyl moiety bound to the lipoyl domains of lipoate-dependent enzymes, thereby converting the octanoylated domains into lipoylated derivatives. In Ajellomyces capsulatus (strain G186AR / H82 / ATCC MYA-2454 / RMSCC 2432) (Darling's disease fungus), this protein is Lipoyl synthase, mitochondrial.